The sequence spans 476 residues: Cysteine--tRNA ligase (476 aa).

Cys-31 is a Zn(2+) binding site. The 'HIGH' region signature appears at 33-43 (PTVYNYAHIGN). Zn(2+) contacts are provided by Cys-211, His-236, and Glu-240. The short motif at 269–273 (KMSKS) is the 'KMSKS' region element. Residue Lys-272 coordinates ATP.

Belongs to the class-I aminoacyl-tRNA synthetase family. In terms of assembly, monomer. Zn(2+) is required as a cofactor.

It localises to the cytoplasm. It carries out the reaction tRNA(Cys) + L-cysteine + ATP = L-cysteinyl-tRNA(Cys) + AMP + diphosphate. This is Cysteine--tRNA ligase from Xanthomonas euvesicatoria pv. vesicatoria (strain 85-10) (Xanthomonas campestris pv. vesicatoria).